The primary structure comprises 158 residues: Ribonuclease H (158 aa).

The region spanning 3–144 (GLKQLLIFTD…CDTLAREAAE (142 aa)) is the RNase H type-1 domain. Mg(2+) is bound by residues Asp12, Glu50, Asp72, and Asp136.

Belongs to the RNase H family. As to quaternary structure, monomer. The cofactor is Mg(2+).

It localises to the cytoplasm. It carries out the reaction Endonucleolytic cleavage to 5'-phosphomonoester.. Endonuclease that specifically degrades the RNA of RNA-DNA hybrids. The protein is Ribonuclease H of Shewanella loihica (strain ATCC BAA-1088 / PV-4).